The following is a 92-amino-acid chain: RNA-binding protein Hfq (92 aa).

A Sm domain is found at 9–68; that stretch reads DPFLNALRRERVPVSIYLVNGIKLQGQVESFDQFVILLKNTVSQMVYKHAISTVVPARPF. A disordered region spans residues 68-92; sequence FNVSSHHNTPNQAAGYNASHDDSAE. Polar residues predominate over residues 69–81; the sequence is NVSSHHNTPNQAA.

This sequence belongs to the Hfq family. Homohexamer.

In terms of biological role, RNA chaperone that binds small regulatory RNA (sRNAs) and mRNAs to facilitate mRNA translational regulation in response to envelope stress, environmental stress and changes in metabolite concentrations. Also binds with high specificity to tRNAs. The chain is RNA-binding protein Hfq from Shewanella loihica (strain ATCC BAA-1088 / PV-4).